The primary structure comprises 540 residues: Synaptotagmin-3 (540 aa).

Residues 9-29 traverse the membrane as a helical segment; that stretch reads GIIGFVIGIPIGLILGFFVLI. The SMP-LTD domain maps to 67-249; that stretch reads DYERVDWFNK…WPQVLEIPIL (183 aa). The tract at residues 227–509 is phospholipid binding; it reads QETIKRQVSS…ELGHVDINLD (283 aa). C2 domains lie at 240-363 and 401-521; these read WPQV…EFNL and RKES…NQKY. Residues Asp-277, Asp-283, Asp-333, Asp-335, and Asp-341 each contribute to the Ca(2+) site.

The protein belongs to the synaptotagmin family. Requires Ca(2+) as cofactor.

Its subcellular location is the membrane. In terms of biological role, may be involved in membrane trafficking. The chain is Synaptotagmin-3 (SYT3) from Arabidopsis thaliana (Mouse-ear cress).